The sequence spans 258 residues: Distal membrane-arm assembly complex protein 2 (258 aa).

It belongs to the ATP synthase subunit s family. In terms of assembly, interacts with incompletely assembled mitochondrial NADH:ubiquinone oxidoreductase complex (complex I).

It is found in the mitochondrion. Required for the assembly of the mitochondrial NADH:ubiquinone oxidoreductase complex (complex I). Involved in the assembly of the distal region of complex I. The sequence is that of Distal membrane-arm assembly complex protein 2 (Dmac2) from Mus musculus (Mouse).